Here is a 1681-residue protein sequence, read N- to C-terminus: Sodium channel protein type 7 subunit alpha (1681 aa).

At 1–118 (MLTSPEPKGL…RRAAIKALVH (118 aa)) the chain is on the cytoplasmic side. One copy of the I repeat lies at 101 to 402 (TLSPLNSLRR…ILTMTYEKEK (302 aa)). The chain crosses the membrane as a helical span at residues 119–138 (PLFRLLILISVLTDSILMCM). At 139 to 142 (SNLP) the chain is on the extracellular side. The chain crosses the membrane as a helical span at residues 143–168 (EWILAIENTLLGIYAFEILVKVIARG). Topologically, residues 169–179 (IWAGSFSFLGD) are cytoplasmic. Residues 180 to 197 (LWNWLDFSVTLFELITRF) form a helical membrane-spanning segment. Topologically, residues 198–201 (SPLS) are extracellular. Residues 202–220 (SFLMLKTIRTFRILKIIPL) form a helical membrane-spanning segment. Topologically, residues 221-238 (NHGLQSIVMTLAQCLKKL) are cytoplasmic. The helical transmembrane segment at 239–260 (FGAIALALFFLAVFSLLGMGLF) threads the bilayer. The Extracellular portion of the chain corresponds to 261 to 339 (MGNLKHKCLR…PDNGFTSFDN (79 aa)). The cysteines at positions 268 and 308 are disulfide-linked. Asn277, Asn282, Asn288, and Asn310 each carry an N-linked (GlcNAc...) asparagine glycan. Positions 340–367 (FGWSLLAMFRLMTQDYPELLYHQILYAS) form an intramembrane region, pore-forming. Residue Gly368 is a topological domain, extracellular. Residues 369–408 (KVYMIFFVMISFWFAFYLTSLFLGILTMTYEKEKQRACEE) traverse the membrane as a helical segment. The Cytoplasmic portion of the chain corresponds to 409 to 506 (SGGLDPKCQQ…EFADRVITHP (98 aa)). The II repeat unit spans residues 488–757 (CSPCWVKLNE…QLAMARIKSG (270 aa)). Residues 507 to 522 (LADLFLVICIVLNICF) form a helical membrane-spanning segment. The Extracellular portion of the chain corresponds to 523–531 (LALEHFPMS). The chain crosses the membrane as a helical span at residues 532-560 (EELRSLLHVGNLVFIGIYTIEMILKIIAM). Residues 561–569 (HPYGYFQIS) lie on the Cytoplasmic side of the membrane. The chain crosses the membrane as a helical span at residues 570–587 (WNIFDSILVVLELTEILL). Topologically, residues 588–593 (ADVEGL) are extracellular. A helical transmembrane segment spans residues 594 to 609 (AVLITVPLIFIKLGKY). Topologically, residues 610–626 (GPPFKSLMRILGSSLMA) are cytoplasmic. A helical transmembrane segment spans residues 627–655 (LKDLVLLLCIFVYFSAVFGMKLFGRSYKD). At 656 to 673 (CVCHIKEDCQPQRWHMSD) the chain is on the extracellular side. Intrachain disulfides connect Cys658–Cys664 and Cys696–Cys705. Residues 674–700 (FLHAYMTVFRILCGEWIETLWECMEVA) constitute an intramembrane region (pore-forming). Position 701 (Gly701) is a topological domain, extracellular. A helical membrane pass occupies residues 702–732 (QAWCIPFYMMVILIGNLLILYLFVTLVSSFS). Residues 733–934 (YYDATSEVNK…KTCCKIVENS (202 aa)) are Cytoplasmic-facing. The span at 806 to 834 (YKDQSSSTEKTPVTESESQSLIASPSASE) shows a compositional bias: polar residues. Residues 806 to 875 (YKDQSSSTEK…MKQSSSSECS (70 aa)) form a disordered region. A Phosphoserine modification is found at Ser843. The III repeat unit spans residues 916–1224 (NGKIWKNIRK…KKQYRALKKL (309 aa)). The helical transmembrane segment at 935–953 (WFECFIGLVTLLCTGTLAL) threads the bilayer. At 954-961 (EDIYIDQR) the chain is on the extracellular side. A helical transmembrane segment spans residues 962 to 990 (KTTKILLEYADMIFAYIFILEMLLKWVAY). The Cytoplasmic segment spans residues 991-998 (GFKAFFSN). The chain crosses the membrane as a helical span at residues 999-1020 (NWYKLDFMVVIVFCLSLIGKTR). Position 1021 (Glu1021) is a topological domain, extracellular. The helical transmembrane segment at 1022–1040 (DLNPLTSIKFLRALRVLSQ) threads the bilayer. The Cytoplasmic portion of the chain corresponds to 1041 to 1055 (FERMKVVLRALIKTT). The helical transmembrane segment at 1056–1080 (LPTVSVFLVCLMIWLLFSVIGVQLF) threads the bilayer. The Extracellular portion of the chain corresponds to 1081–1127 (AGKFYECIDPTKGERFPVFEVMNKSQCEKLLFNESMPWENAKLNFDN). The cysteines at positions 1087 and 1107 are disulfide-linked. N-linked (GlcNAc...) asparagine glycans are attached at residues Asn1103 and Asn1113. The segment at residues 1128–1154 (VGNGFLSLLQVATFNGWISIMNSAIDS) is an intramembrane region (pore-forming). Residues 1155 to 1167 (VGVNMQPSFEYNL) lie on the Extracellular side of the membrane. The chain crosses the membrane as a helical span at residues 1168-1202 (YMYSYFIIFVIFGLFLPLCMLIGVIIRNFNKQKIK). Topologically, residues 1203–1250 (QGGSNIFITVKQKKQYRALKKLLYADVQKPTPRPRNKFQGFLFDLVTH) are cytoplasmic. The stretch at 1233–1531 (TPRPRNKFQG…WNRFDPDRTQ (299 aa)) is one IV repeat. Residues 1251–1272 (RVFNVIIILLICFQATTIMIQK) traverse the membrane as a helical segment. The Extracellular portion of the chain corresponds to 1273–1276 (DEQS). The helical transmembrane segment at 1277 to 1305 (PQMETAIFWMNSIFVMLFTLECILKLTAF) threads the bilayer. The Cytoplasmic portion of the chain corresponds to 1306-1312 (RCHYFTS). The chain crosses the membrane as a helical span at residues 1313–1338 (AWNVHDFMVVIFSITGLLLPLTIGQY). Over 1339–1341 (FVP) the chain is Extracellular. A helical transmembrane segment spans residues 1342–1362 (PSLVQLILLSRVIHILRPGKG). Over 1363–1377 (PKVFHDLMLPLILAL) the chain is Cytoplasmic. A helical membrane pass occupies residues 1378–1402 (PALLNISLLIFLVMFIYAIFGMYNF). The Extracellular segment spans residues 1403–1420 (AYVKKEAGINDVSNFETF). Residues 1421–1444 (GSSMLCLFQVTTFSGWDGMLDAIF) constitute an intramembrane region (pore-forming). Topologically, residues 1445–1468 (NSQWSDCDPDKINPGTQVKGDCGS) are extracellular. A disulfide bridge connects residues Cys1451 and Cys1466. The chain crosses the membrane as a helical span at residues 1469-1504 (PSVGISYFVSYILISWLIIVNMYIVLIMEFLSIPSQ). The Cytoplasmic portion of the chain corresponds to 1505 to 1681 (KKSRTLSEDD…EEKASIQTQI (177 aa)). The span at 1647-1662 (NVSDTPAIDDRRDDLT) shows a compositional bias: basic and acidic residues. The segment at 1647–1681 (NVSDTPAIDDRRDDLTSKGAHSGKIEEKASIQTQI) is disordered.

Belongs to the sodium channel (TC 1.A.1.10) family. SCN7A subfamily. The sodium channel formed by SCN7A is probably a heterooligomeric complex consisting of the ion conducting pore forming alpha subunit SCN7A and regulatory beta subunits such as SCN3B. Interacts with ATP1A1; activates ATP1A1 and thereby indirectly signals to nearby neurons to regulate sodium homeostasis. As to expression, not tissue specific but widely expressed. Expressed in regions of the central nervous system that control body fluid ionic balance.

The protein localises to the cell membrane. The catalysed reaction is Na(+)(in) = Na(+)(out). In terms of biological role, sodium leak channel functioning as an osmosensor regulating sodium ion levels in various tissues and organs. While most sodium channels are voltage-gated, SCN7A is not and lets sodium flow through membrane along its concentration gradient. In glial cells of the central nervous system, senses body-fluid sodium levels and controls salt intake behavior as well as voluntary water intake through activation of nearby neurons to maintain appropriate sodium levels in the body. By mediating sodium influx into keratinocytes, also plays a role in skin barrier homeostasis. This chain is Sodium channel protein type 7 subunit alpha, found in Mus musculus (Mouse).